The following is a 156-amino-acid chain: ATP synthase subunit b (156 aa).

Residues 7 to 27 (LIGQTVAFIIFVWFCMKFVWP) form a helical membrane-spanning segment.

Belongs to the ATPase B chain family. As to quaternary structure, F-type ATPases have 2 components, F(1) - the catalytic core - and F(0) - the membrane proton channel. F(1) has five subunits: alpha(3), beta(3), gamma(1), delta(1), epsilon(1). F(0) has three main subunits: a(1), b(2) and c(10-14). The alpha and beta chains form an alternating ring which encloses part of the gamma chain. F(1) is attached to F(0) by a central stalk formed by the gamma and epsilon chains, while a peripheral stalk is formed by the delta and b chains.

It is found in the cell inner membrane. Functionally, f(1)F(0) ATP synthase produces ATP from ADP in the presence of a proton or sodium gradient. F-type ATPases consist of two structural domains, F(1) containing the extramembraneous catalytic core and F(0) containing the membrane proton channel, linked together by a central stalk and a peripheral stalk. During catalysis, ATP synthesis in the catalytic domain of F(1) is coupled via a rotary mechanism of the central stalk subunits to proton translocation. Its function is as follows. Component of the F(0) channel, it forms part of the peripheral stalk, linking F(1) to F(0). This Shewanella sp. (strain MR-4) protein is ATP synthase subunit b.